The chain runs to 395 residues: GPI-anchor transamidase (395 aa).

The N-terminal stretch at 1-27 is a signal peptide; the sequence is MAVTDSLSRAASTLAAVLLLSFGSVAA. The Lumenal portion of the chain corresponds to 28 to 368; sequence SHIEDQAEQF…PKLKDWHPPG (341 aa). Ca(2+) contacts are provided by D79, I82, E118, and D120. The active-site Proton donor is the H164. The active-site Nucleophile; acyl-thioester intermediate is the C206. Positions 206, 232, and 234 each coordinate a protein. Residues 231–236 form an autoinhibitory loop region; the sequence is DSLSHQ. C275 and C280 are disulfide-bonded. A helical transmembrane segment spans residues 369–385; it reads GFILGLWALIIMVFFKT. Over 386 to 395 the chain is Cytoplasmic; the sequence is YGIKHMKFIF.

This sequence belongs to the peptidase C13 family. Heteropentamer. Part of the GPI-anchor transamidase complex, consisting of PIGK, PIGT, PIGS, PIGU and GAA1. Interacts with GPAA1. Interacts with PIGT; this interaction, via a disulfide link, stabilizes the expression of GAA1 and PIGK and links them to PIGS. In terms of processing, the disulfide bond between PIGK/GPI8 and PIGT is important for normal enzyme activity.

The protein localises to the endoplasmic reticulum membrane. Its pathway is glycolipid biosynthesis; glycosylphosphatidylinositol-anchor biosynthesis. In the absence of proproteins substrates, exists in an inactive state with a disrupted catalytic site by an autoinhibitory loop. The binding of proprotein substrates, particularly the CSP region, to GPI-T triggers concerted conformational changes that alleviate the inhibition by the autoinhibitory loop. Meanwhile, proprotein residues near the omega- site induce the formation of a catalytic cleft for catalysis, following which the products are released and GPI-T reverts to the inactive state. In terms of biological role, catalytic subunit of the glycosylphosphatidylinositol-anchor (GPI-anchor) transamidase (GPI-T) complex that catalyzes the formation of the linkage between a proprotein and a GPI-anchor and participates in GPI anchored protein biosynthesis. Recognizes diverse proproteins at a C-terminal signal peptide (CSP) region that lacks consensus sequence and replaces it with a GPI-anchor via a transamidation reaction. Transamidation catalysis reaction follows a two-phase mechanism. In the acyl-enzyme phase, the carbonyl group of the proproteins's omega-site undergoes a nucleophilic attack forming an enzyme-substrate thioester bond. Followed by a general acid catalysis that allows CSP releasing, regenerating the carbonyl, and forming the acyl-enzyme intermediate. In the GPI-anchor attachment phase, the amino group of the GPI-anchor's ethanolamine phosphate, the one on third mannose (EtNP3), mediates a nucleophilic attack on the carbonyl of the acyl-enzyme intermediate, replacing the CSP, allowing GPI-anchor attachment to the omega-residue, therefore forming the product and freeing the enzyme. The sequence is that of GPI-anchor transamidase from Pongo abelii (Sumatran orangutan).